Here is a 622-residue protein sequence, read N- to C-terminus: MELFALLIKVAGLLATVTVGANVVSYSRFRRQNLAKFRSPIDESKEVLADFNSIEHEEGKFFFGLATAPAHAEDDLDDAWLQFAKETPCSAEEAEAADKKARRKKVKLAVGAITKGLAKNTHGKEDKNAADKPPSKNVAAWHNAPHAEDRLKFWSDPDKEVKLAKDTGVTVFRMGVDWSRIMPVEPTKGIKEAVNYEAVEHYKWILKKVRSNGMKVMLTLFHHSLPPWAADYGGWKMEKTVDYFMDFTRIVVDSMYDLVDSWVTFNEPHIFTMLTYMCGSWPGNNPDFLEIATSTLPMGVFHRALHWMAVAHSKAYDYIHGKISLKKPLVGVAHHVSFMRPYGLFDIGAVTISNSLTIFPYIDSICEKLDFIGINYYGQEAVCGAGLKLVETDEYSESGRGVYPDGLYRVLLMFHERYKHLKVPFIVTENGVSDETDVIRRPYLIEHLLALYAAMLKGVPVLGYIFWTISDNWEWADGYGPKFGLVAVDRSHDLARTLRQSYHLFSKIVKSGKVTRKDRSLAWNELQKAAKAGKLRPFYRGVDNHNLMYADGLDKPQWRPFVDRDWRFGHYQMDGLQDPLSRVARTLLIWPLIMKKRIRKVKIKHTDDAGLVLHPALASPFD.

Residues 1-3 (MEL) lie on the Stromal side of the membrane. Residues 4-24 (FALLIKVAGLLATVTVGANVV) form a helical; Signal-anchor membrane-spanning segment. At 25–622 (SYSRFRRQNL…LHPALASPFD (598 aa)) the chain is on the cytoplasmic side. A beta-D-glucoside contacts are provided by residues H222, 266–267 (NE), Y377, E429, W467, 474–475 (EW), and F483. E267 functions as the Proton donor in the catalytic mechanism. Catalysis depends on E429, which acts as the Nucleophile.

The protein belongs to the glycosyl hydrolase 1 family. Expressed in hypocotyls, cotyledons, stems, leaves, pedicels, sepals, anthers and pistils. Limited expression in roots. Not detected in petals or filaments.

Its subcellular location is the plastid. The protein localises to the chloroplast. It is found in the chloroplast outer membrane. The catalysed reaction is 2 a 1,2-diacyl-3-O-(beta-D-galactosyl)-sn-glycerol = a 1,2-diacyl-3-O-[beta-D-galactosyl-(1-&gt;6)-beta-D-galactosyl]-sn-glycerol + a 1,2-diacyl-sn-glycerol. Induced by MgCl(2). Its function is as follows. Glycosyl hydrolase family protein acting primarily as a highly specific galactosyltransferase. Synthesizes digalactosyldiacylglycerol from monogalactosyldiacylglycerol in the absence of UDP-galactose in vitro. Hydrolyzes o- and p-nitrophenyl beta-D-glucoside in vitro. Plays a role in freezing tolerance. May play a role in chloroplast protection. The chain is Galactolipid galactosyltransferase SFR2, chloroplastic from Arabidopsis thaliana (Mouse-ear cress).